The sequence spans 923 residues: Carnitine O-acetyltransferase YAT2 (923 aa).

The segment covering 1–11 (MSSGSTIVSSD) has biased composition (polar residues). 2 disordered regions span residues 1 to 21 (MSSG…KHEE) and 197 to 232 (NKPY…KRKH). An N-acetylserine modification is found at Ser2. A compositionally biased stretch (basic and acidic residues) spans 12 to 21 (KSGRTFKHEE). Positions 204 to 219 (DLEDPDYSSDEDDNDE) are enriched in acidic residues. The segment covering 220-232 (PTQKDFDDRKRKH) has biased composition (basic and acidic residues). CoA is bound by residues 529–541 (GRRS…VKPD) and Ser567. Ser576 provides a ligand contact to (R)-carnitine. Residues 763–787 (NAVNNPPKRNGHTVNGSRKTSSSSQ) form a disordered region. The span at 774–787 (HTVNGSRKTSSSSQ) shows a compositional bias: polar residues. Ser783 bears the Phosphoserine mark.

Belongs to the carnitine/choline acetyltransferase family.

It localises to the cytoplasm. The enzyme catalyses (R)-carnitine + acetyl-CoA = O-acetyl-(R)-carnitine + CoA. In terms of biological role, carnitine O-acetyltransferase involved in the shutteling of acetyl-CoA in the cell. This Saccharomyces cerevisiae (strain ATCC 204508 / S288c) (Baker's yeast) protein is Carnitine O-acetyltransferase YAT2.